Consider the following 211-residue polypeptide: Type II secretion system protein J (211 aa).

Residues 1-7 (MRPRAAG) constitute a propeptide, leader sequence. Phe-8 carries the N-methylphenylalanine modification. The chain crosses the membrane as a helical span at residues 8–28 (FTLIEVLLATMLLVGGLALAF).

It belongs to the GSP J family.

Its subcellular location is the membrane. Its function is as follows. Involved in a type II secretion system (T2SS, formerly general secretion pathway, GSP) for the export of proteins. The sequence is that of Type II secretion system protein J (xpsJ) from Xanthomonas campestris pv. campestris (strain ATCC 33913 / DSM 3586 / NCPPB 528 / LMG 568 / P 25).